We begin with the raw amino-acid sequence, 472 residues long: Sodium-coupled neutral amino acid transporter 5 (472 aa).

An N-acetylmethionine modification is found at Met1. The Cytoplasmic portion of the chain corresponds to 1–48 (MELQDPKMNGALPSDAVGYRQEREGFLPSRGPAPGSKPVQFMDFEGKT). Residues 49 to 71 (SFGMSVFNLSNAIMGSGILGLAY) traverse the membrane as a helical segment. Over 72-87 (AMAHTGVIFFLALLLC) the chain is Extracellular. A helical transmembrane segment spans residues 88 to 108 (IALLSSYSIHLLLTCAGIAGI). Over 109-125 (RAYEQLGQRAFGPAGKV) the chain is Cytoplasmic. A helical transmembrane segment spans residues 126 to 146 (VVATVICLHNVGAMSSYLFII). Over 147–166 (KSELPLVIGTFLYMDPEGDW) the chain is Extracellular. Residues 167 to 187 (FLKGNLLIIIVSVLIILPLAL) traverse the membrane as a helical segment. The Cytoplasmic segment spans residues 188–192 (MKHLG). The chain crosses the membrane as a helical span at residues 193-213 (YLGYTSGLSLTCMLFFLVSVI). At 214 to 257 (YKKFQLGCAIGHNETAMESEALVGLPSQGLNSSCEAQMFTVDSQ) the chain is on the extracellular side. Residues Cys221 and Cys247 are joined by a disulfide bond. N-linked (GlcNAc...) asparagine glycosylation occurs at Asn226. The helical transmembrane segment at 258–278 (MSYTVPIMAFAFVCHPEVLPI) threads the bilayer. The Cytoplasmic segment spans residues 279-295 (YTELCRPSKRRMQAVAN). Residues 296-316 (VSIGAMFCMYGLTATFGYLTF) form a helical membrane-spanning segment. Over 317–334 (YSSVKAEMLHMYSQKDPL) the chain is Extracellular. Residues 335-355 (ILCVRLAVLLAVTLTVPVVLF) form a helical membrane-spanning segment. The Cytoplasmic portion of the chain corresponds to 356 to 376 (PIRRALQQLLFPGKAFSWPRH). Residues 377–397 (VAIALILLVLVNVLVICVPTI) form a helical membrane-spanning segment. At 398–399 (RD) the chain is on the extracellular side. Residues 400–420 (IFGVIGSTSAPSLIFILPSIF) traverse the membrane as a helical segment. Topologically, residues 421–439 (YLRIVPSEVEPFLSWPKIQ) are cytoplasmic. Residues 440-460 (ALCFGVLGVLFMAVSLGFMFA) form a helical membrane-spanning segment. The Extracellular segment spans residues 461 to 472 (NWATGQSRMSGH).

The protein belongs to the amino acid/polyamine transporter 2 family. In terms of tissue distribution, predominantly expressed in stomach, brain, liver, lung and intestinal tract.

It localises to the cell membrane. The enzyme catalyses L-serine(out) + Na(+)(out) + H(+)(in) = L-serine(in) + Na(+)(in) + H(+)(out). The catalysed reaction is L-alanine(out) + Na(+)(out) + H(+)(in) = L-alanine(in) + Na(+)(in) + H(+)(out). It catalyses the reaction glycine(out) + Na(+)(out) + H(+)(in) = glycine(in) + Na(+)(in) + H(+)(out). It carries out the reaction L-glutamine(out) + Na(+)(out) + H(+)(in) = L-glutamine(in) + Na(+)(in) + H(+)(out). The enzyme catalyses L-asparagine(out) + Na(+)(out) + H(+)(in) = L-asparagine(in) + Na(+)(in) + H(+)(out). The catalysed reaction is L-histidine(out) + Na(+)(out) + H(+)(in) = L-histidine(in) + Na(+)(in) + H(+)(out). It catalyses the reaction L-cysteine(out) + Na(+)(out) + H(+)(in) = L-cysteine(in) + Na(+)(in) + H(+)(out). Its activity is regulated as follows. Not inhibited by lithium. Partial allosteric regulation on ions sodium binding. Functionally, symporter that cotransports neutral amino acids and sodium ions, coupled to an H(+) antiporter activity. Releases L-glutamine and glycine from astroglial cells and may participate in the glutamate/GABA-L-glutamine cycle and the NMDA receptors activation. In addition, contributes significantly to L-glutamine uptake in retina, namely in ganglion and Mueller cells therefore, participates in the retinal glutamate-glutamine cycle. The transport activity is pH sensitive and Li(+) tolerant. Moreover functions in both direction and is associated with large uncoupled fluxes of protons. The transport is electroneutral coupled to the cotransport of 1 Na(+) and the antiport of 1 H(+). May have a particular importance for modulation of net hepatic glutamine flux. The chain is Sodium-coupled neutral amino acid transporter 5 (SLC38A5) from Homo sapiens (Human).